Consider the following 660-residue polypeptide: Glycogen debranching enzyme (660 aa).

The active-site Nucleophile is the Asp338. Catalysis depends on Glu373, which acts as the Proton donor. Residues 460–472 (NEANGEDNRDGAW) show a composition bias toward basic and acidic residues. The disordered stretch occupies residues 460-482 (NEANGEDNRDGAWENHSNNHGYE).

The protein belongs to the glycosyl hydrolase 13 family.

The enzyme catalyses Hydrolysis of (1-&gt;6)-alpha-D-glucosidic linkages to branches with degrees of polymerization of three or four glucose residues in limit dextrin.. It functions in the pathway glycan degradation; glycogen degradation. In terms of biological role, removes maltotriose and maltotetraose chains that are attached by 1,6-alpha-linkage to the limit dextrin main chain, generating a debranched limit dextrin. In Cronobacter sakazakii (strain ATCC BAA-894) (Enterobacter sakazakii), this protein is Glycogen debranching enzyme.